The primary structure comprises 560 residues: Arginine--tRNA ligase (560 aa).

Residues 135–145 (ANPTGLLHMGN) carry the 'HIGH' region motif.

It belongs to the class-I aminoacyl-tRNA synthetase family. As to quaternary structure, monomer.

It is found in the cytoplasm. The enzyme catalyses tRNA(Arg) + L-arginine + ATP = L-arginyl-tRNA(Arg) + AMP + diphosphate. The protein is Arginine--tRNA ligase of Moorella thermoacetica (strain ATCC 39073 / JCM 9320).